The following is a 594-amino-acid chain: Elongation factor 4 (594 aa).

Positions 2–184 (KNIRNFSIIA…TIVAKVPAPE (183 aa)) constitute a tr-type G domain. GTP contacts are provided by residues 14–19 (DHGKST) and 131–134 (NKID).

This sequence belongs to the TRAFAC class translation factor GTPase superfamily. Classic translation factor GTPase family. LepA subfamily.

It localises to the cell inner membrane. It carries out the reaction GTP + H2O = GDP + phosphate + H(+). Required for accurate and efficient protein synthesis under certain stress conditions. May act as a fidelity factor of the translation reaction, by catalyzing a one-codon backward translocation of tRNAs on improperly translocated ribosomes. Back-translocation proceeds from a post-translocation (POST) complex to a pre-translocation (PRE) complex, thus giving elongation factor G a second chance to translocate the tRNAs correctly. Binds to ribosomes in a GTP-dependent manner. The polypeptide is Elongation factor 4 (Francisella philomiragia subsp. philomiragia (strain ATCC 25017 / CCUG 19701 / FSC 153 / O#319-036)).